The following is a 203-amino-acid chain: Inactive ribonuclease-like protein 9 (203 aa).

Residues 1–25 (MRTPITTHSLLLLLLLQQLLQPVQL) form the signal peptide. 3 disulfides stabilise this stretch: cysteine 96/cysteine 151, cysteine 114/cysteine 166, and cysteine 121/cysteine 128. N-linked (GlcNAc...) asparagine glycans are attached at residues asparagine 129 and asparagine 141.

This sequence belongs to the pancreatic ribonuclease family.

Its subcellular location is the secreted. Does not exhibit any ribonuclease activity. This Macaca assamensis (Assam macaque) protein is Inactive ribonuclease-like protein 9 (RNASE9).